The sequence spans 211 residues: Redox-sensing transcriptional repressor Rex (211 aa).

The H-T-H motif DNA-binding region spans 18-57 (LYYRFLENLHASGKQRVSSSELSEAVKVDSATIRRDFSYF). 92-97 (GVGNLG) serves as a coordination point for NAD(+).

Belongs to the transcriptional regulatory Rex family. Homodimer.

Its subcellular location is the cytoplasm. In terms of biological role, modulates transcription in response to changes in cellular NADH/NAD(+) redox state. This is Redox-sensing transcriptional repressor Rex from Halalkalibacterium halodurans (strain ATCC BAA-125 / DSM 18197 / FERM 7344 / JCM 9153 / C-125) (Bacillus halodurans).